A 686-amino-acid chain; its full sequence is ATP-dependent zinc metalloprotease FTSH 6, chloroplastic (686 aa).

The segment covering 1-14 has biased composition (polar residues); that stretch reads MSPTAMSLTTTTSR. Residues 1–52 are disordered; it reads MSPTAMSLTTTTSRLPICRAQGGGVAKEKRTTPPPAKITPPSSSSSEAAGLS. The transit peptide at 1–75 directs the protein to the chloroplast; it reads MSPTAMSLTT…LGLTAARPAR (75 aa). Residues 39-52 show a composition bias toward low complexity; the sequence is TPPSSSSSEAAGLS. A helical transmembrane segment spans residues 164–184; the sequence is VMLLDLLVNFGFPLLFVASLL. 261 to 268 is a binding site for ATP; sequence GPPGTGKT. His-483 is a binding site for Zn(2+). The active site involves Glu-484. Zn(2+) contacts are provided by His-487 and Asp-562.

The protein in the N-terminal section; belongs to the AAA ATPase family. In the C-terminal section; belongs to the peptidase M41 family. Zn(2+) is required as a cofactor.

The protein localises to the plastid. It localises to the chloroplast thylakoid membrane. Its function is as follows. Probable ATP-dependent zinc metallopeptidase. In Oryza sativa subsp. japonica (Rice), this protein is ATP-dependent zinc metalloprotease FTSH 6, chloroplastic (FTSH6).